The primary structure comprises 266 residues: Isoprenyl transferase (266 aa).

D36 is an active-site residue. Residue D36 participates in Mg(2+) binding. Residues 37–40 (GNGR), W41, R49, H53, and 81–83 (STE) contribute to the substrate site. N84 acts as the Proton acceptor in catalysis. Substrate is bound by residues W85, R87, R204, and 210–212 (RIS). Position 223 (E223) interacts with Mg(2+).

This sequence belongs to the UPP synthase family. As to quaternary structure, homodimer. The cofactor is Mg(2+).

Catalyzes the condensation of isopentenyl diphosphate (IPP) with allylic pyrophosphates generating different type of terpenoids. This chain is Isoprenyl transferase, found in Prochlorococcus marinus (strain SARG / CCMP1375 / SS120).